Reading from the N-terminus, the 139-residue chain is Large ribosomal subunit protein uL16 (139 aa).

The segment covering 1–19 (MLIPRRVKHRKQHHPKRSG) has biased composition (basic residues). The segment at 1 to 25 (MLIPRRVKHRKQHHPKRSGMSKGGT) is disordered.

Belongs to the universal ribosomal protein uL16 family. Part of the 50S ribosomal subunit.

In terms of biological role, binds 23S rRNA and is also seen to make contacts with the A and possibly P site tRNAs. This Streptomyces griseus subsp. griseus (strain JCM 4626 / CBS 651.72 / NBRC 13350 / KCC S-0626 / ISP 5235) protein is Large ribosomal subunit protein uL16.